The primary structure comprises 441 residues: Ribulose bisphosphate carboxylase large chain (441 aa).

The substrate site is built by N89 and T139. The active-site Proton acceptor is the K141. K143 is a binding site for substrate. Mg(2+) contacts are provided by K167, D169, and E170. An N6-carboxylysine modification is found at K167. H260 (proton acceptor) is an active-site residue. Residues X261, H293, and S345 each coordinate substrate.

The protein belongs to the RuBisCO large chain family. Type I subfamily. Heterohexadecamer of 8 large chains and 8 small chains; disulfide-linked. The disulfide link is formed within the large subunit homodimers. The cofactor is Mg(2+). In terms of processing, the disulfide bond which can form in the large chain dimeric partners within the hexadecamer appears to be associated with oxidative stress and protein turnover.

Its subcellular location is the plastid. It localises to the chloroplast. The enzyme catalyses 2 (2R)-3-phosphoglycerate + 2 H(+) = D-ribulose 1,5-bisphosphate + CO2 + H2O. The catalysed reaction is D-ribulose 1,5-bisphosphate + O2 = 2-phosphoglycolate + (2R)-3-phosphoglycerate + 2 H(+). In terms of biological role, ruBisCO catalyzes two reactions: the carboxylation of D-ribulose 1,5-bisphosphate, the primary event in carbon dioxide fixation, as well as the oxidative fragmentation of the pentose substrate in the photorespiration process. Both reactions occur simultaneously and in competition at the same active site. This chain is Ribulose bisphosphate carboxylase large chain, found in Apocynum cannabinum (Hemp dogbane).